The chain runs to 280 residues: tRNA (guanine-N(1)-)-methyltransferase (280 aa).

Residues aspartate 71 to arginine 94 form a disordered region. Residues serine 74–glutamine 84 are compositionally biased toward polar residues. S-adenosyl-L-methionine contacts are provided by residues glycine 146 and isoleucine 170–leucine 175.

The protein belongs to the RNA methyltransferase TrmD family. As to quaternary structure, homodimer.

It is found in the cytoplasm. It catalyses the reaction guanosine(37) in tRNA + S-adenosyl-L-methionine = N(1)-methylguanosine(37) in tRNA + S-adenosyl-L-homocysteine + H(+). Specifically methylates guanosine-37 in various tRNAs. The protein is tRNA (guanine-N(1)-)-methyltransferase of Corynebacterium aurimucosum (strain ATCC 700975 / DSM 44827 / CIP 107346 / CN-1) (Corynebacterium nigricans).